A 385-amino-acid chain; its full sequence is Cyclin-A3-2 (385 aa).

The segment at 1–110 (MADKENSTPA…STSTASPSSG (110 aa)) is disordered. 3 stretches are compositionally biased toward low complexity: residues 7 to 41 (STPA…GAPP), 74 to 88 (PSSK…AAAP), and 96 to 110 (PVSS…PSSG).

Belongs to the cyclin family. Cyclin AB subfamily.

This Oryza sativa subsp. japonica (Rice) protein is Cyclin-A3-2 (CYCA3-2).